The sequence spans 607 residues: MFAARFDPSRHYEEGDTAPPAPSLPMKRSRDAQQDESESEMSSAESEDEAMQLDDEEEVVDSKGKENHGSDSIGTGEADKRHQSVLSRFQRTISVQDKLDSDAIVGSDSEEEPAKMHGLVPIAQPAIVRDTLAQDSRKERKLLAWSNTTKIHYDSTMTKPFAAYKDILSTSLLANVEGGFSRTAFPIQTALLDSVLPLMSQAYSVSKRYYTRKVGDILVNASTGSGKTLAYAMLLIHILSRRTVNKLRAVILVPTKLLVHQVYDTVQALAKGSSVVVAVSKMDTSLKEESAKLKAQEPDVLIITPGRLVDHLNMQTFSLKNLKFLVLDEADRLLNQSFQNWCIELMTRLNAERPFKGPGNVIKMIFSATLTTNTERLHDLQLHNPKLFLMGSQLYHMPAQLQEYNLPIPTSKSYAKPLILLRLLPLLSTESLRILVFVKSNEASIRLAALLTAMVGNGLSAVSTTVGSINNNNSKATNRKLIEAFAAGASGHCSILVSTDLMSRGLDISGISHVINYDLPISSQQYVHRCGRTARANTSGTAVNLLVGKGEQNFWKDHIDSDISRAPDGSHLFFDEEQREQLVSLSEEDTATYKKCLEELKKSVLGR.

Residues 1–83 (MFAARFDPSR…GTGEADKRHQ (83 aa)) form a disordered region. Acidic residues predominate over residues 34-59 (QDESESEMSSAESEDEAMQLDDEEEV). Residues 60 to 69 (VDSKGKENHG) are compositionally biased toward basic and acidic residues. A Q motif motif is present at residues 184–192 (AFPIQTALL). The Helicase ATP-binding domain occupies 208–388 (RYYTRKVGDI…DLQLHNPKLF (181 aa)). 221 to 228 (ASTGSGKT) is a binding site for ATP. The short motif at 328 to 331 (DEAD) is the DEAD box element. Residues 419–578 (ILLRLLPLLS…GSHLFFDEEQ (160 aa)) enclose the Helicase C-terminal domain.

The protein belongs to the DEAD box helicase family. DDX51/DBP6 subfamily. In terms of assembly, associated with pre-ribosomal particles.

The protein localises to the nucleus. Its subcellular location is the nucleolus. The enzyme catalyses ATP + H2O = ADP + phosphate + H(+). ATP-binding RNA helicase involved in the biogenesis of 60S ribosomal subunits and is required for the normal formation of 25S and 5.8S rRNAs. In Eremothecium gossypii (strain ATCC 10895 / CBS 109.51 / FGSC 9923 / NRRL Y-1056) (Yeast), this protein is ATP-dependent RNA helicase DBP6 (DBP6).